The primary structure comprises 168 residues: Cell division inhibitor SulA (168 aa).

Residues 105–111 form a ftsZ binding region; it reads ALETGNY. The interval 161 to 168 is lon protease binding; it reads RIHSRMVH.

It belongs to the SulA family. Interacts with FtsZ. Post-translationally, is rapidly cleaved and degraded by the Lon protease once DNA damage is repaired.

In terms of biological role, component of the SOS system and an inhibitor of cell division. Accumulation of SulA causes rapid cessation of cell division and the appearance of long, non-septate filaments. In the presence of GTP, binds a polymerization-competent form of FtsZ in a 1:1 ratio, thus inhibiting FtsZ polymerization and therefore preventing it from participating in the assembly of the Z ring. This mechanism prevents the premature segregation of damaged DNA to daughter cells during cell division. This Cronobacter turicensis (strain DSM 18703 / CCUG 55852 / LMG 23827 / z3032) protein is Cell division inhibitor SulA.